The primary structure comprises 153 residues: ORM1-like protein 3 (153 aa).

The important for ceramide level-sensing stretch occupies residues 1-17 (MNVGTAHSEVNPNTRVM). Residues 1–21 (MNVGTAHSEVNPNTRVMNSRG) are Cytoplasmic-facing. 2 helical membrane passes run 22–42 (IWLSYVLAIGLLHVVLLSIPF) and 43–63 (VSVPVVWTLTNLIHNLGMYIF). Over 64 to 94 (LHTVKGTPFETPDQGKARLLTHWEQMDYGVQ) the chain is Cytoplasmic. Residues 95–117 (FTASRKFLTITPIVLYFLTSFYT) traverse the membrane as a helical segment. Over 118 to 121 (KYDQ) the chain is Extracellular. A helical membrane pass occupies residues 122-142 (VHFILNTVSLMTVLIPKLPQL). Pro137 is subject to Hydroxyproline. At 143-153 (HGVRIFGINKY) the chain is on the cytoplasmic side.

Belongs to the ORM family. In terms of assembly, ceramide-sensitive subunit of the serine palmitoyltransferase (SPT) complex, which is also composed of SPTLC1, SPTLC2/3 and SPTSSA/B. In terms of processing, when hydroxylated at Pro-137, ubiquitinated via 'Lys-48'-linkage, leading to proteasomal degradation. In endothelial cells, ORMDL3 proteasomal degradation is controlled by the sphingosine 1-phosphate receptor signaling pathway.

Its subcellular location is the endoplasmic reticulum membrane. Functionally, plays an essential role in the homeostatic regulation of sphingolipid de novo biosynthesis by modulating the activity of the serine palmitoyltransferase (SPT) in response to ceramide levels. When complexed to SPT, the binding of ceramides to its N-terminus stabilizes a conformation that block SPT substrate entry, hence preventing SPT catalytic activity. Through this mechanism, maintains ceramide levels at sufficient concentrations for the production of complex sphingolipids, but which prevents the accumulation of ceramides to levels that trigger apoptosis. This chain is ORM1-like protein 3 (Ormdl3), found in Mus musculus (Mouse).